The following is a 395-amino-acid chain: Ribosomal RNA small subunit methyltransferase H (395 aa).

Residues glycine 101–histidine 103, aspartate 120, tyrosine 147, aspartate 171, and glutamine 178 each bind S-adenosyl-L-methionine.

This sequence belongs to the methyltransferase superfamily. RsmH family.

The protein resides in the cytoplasm. The catalysed reaction is cytidine(1402) in 16S rRNA + S-adenosyl-L-methionine = N(4)-methylcytidine(1402) in 16S rRNA + S-adenosyl-L-homocysteine + H(+). Specifically methylates the N4 position of cytidine in position 1402 (C1402) of 16S rRNA. This chain is Ribosomal RNA small subunit methyltransferase H, found in Mycobacterium marinum (strain ATCC BAA-535 / M).